Consider the following 460-residue polypeptide: Argininosuccinate lyase (460 aa).

It belongs to the lyase 1 family. Argininosuccinate lyase subfamily.

The protein localises to the cytoplasm. The enzyme catalyses 2-(N(omega)-L-arginino)succinate = fumarate + L-arginine. The protein operates within amino-acid biosynthesis; L-arginine biosynthesis; L-arginine from L-ornithine and carbamoyl phosphate: step 3/3. This is Argininosuccinate lyase from Campylobacter hominis (strain ATCC BAA-381 / DSM 21671 / CCUG 45161 / LMG 19568 / NCTC 13146 / CH001A).